A 758-amino-acid polypeptide reads, in one-letter code: Putative transcriptional regulatory protein YJL206C (758 aa).

The segment at residues 47–73 (CIACRKRKVRCSGNIPCRLCQTNSYEC) is a DNA-binding region (zn(2)-C6 fungal-type).

Belongs to the ASG1 family.

Its subcellular location is the nucleus. The sequence is that of Putative transcriptional regulatory protein YJL206C from Saccharomyces cerevisiae (strain ATCC 204508 / S288c) (Baker's yeast).